Here is a 112-residue protein sequence, read N- to C-terminus: MVTEWKNFFKGCCMQLLNVGFGNTVMVGRVVAVVNTGSSPARKIREIAKKNGKLIDVTEGRRTRSMLVMDSNHVVLSSVQSDTISQRLQAMRIDLQLGECREQGKKVYNENE.

This sequence belongs to the RemA family.

This chain is Putative regulatory protein DP2861, found in Desulfotalea psychrophila (strain LSv54 / DSM 12343).